A 142-amino-acid chain; its full sequence is Domesticated amidase effector 2 (142 aa).

The N-terminal stretch at M1–V35 is a signal peptide. Catalysis depends on residues C43 and H94.

It belongs to the cell wall amidase Dae2/Tae2-like family. May be post-translationally modified, since the saliva wild-type protein is slightly heavier than the recombinant one. In terms of tissue distribution, detected in salivary glands and in the gut (at protein level).

The protein localises to the secreted. Functionally, tick gut and saliva antibacterial peptide that directly antagonizes host skin commensals which enter the ticks during feeding. Acts as a cell wall hydrolase that cleaves the bond between gamma-D-glutamate-meso-diaminopimelate of a peptide stem and D-alanine of another peptide stem in peptidoglycans. In vitro, degrades peptidoglycans from both Gram-negative and Gram-positive bacteria. Is not able to traverse the protective outer membrane of Gram-negative bacteria. Is not able to kill Borrelia burgdorferi, one of the Lyme disease-causing bacteria. In Ixodes scapularis (Black-legged tick), this protein is Domesticated amidase effector 2.